We begin with the raw amino-acid sequence, 106 residues long: UPF0060 membrane protein Bxeno_B1021 (106 aa).

The next 4 helical transmembrane spans lie at 2 to 22, 30 to 50, 58 to 78, and 82 to 102; these read KTFLLYAVTAVAEIVGCYLPW, SIWLLVPGALSLALFAWLLTL, VYAAYGGVYVAVAIAWLWCVD, and PTLWDAAGVVFTLAGMAIIAF.

It belongs to the UPF0060 family.

The protein resides in the cell inner membrane. The protein is UPF0060 membrane protein Bxeno_B1021 of Paraburkholderia xenovorans (strain LB400).